We begin with the raw amino-acid sequence, 171 residues long: Endoribonuclease YbeY (171 aa).

Positions 126, 130, and 136 each coordinate Zn(2+).

This sequence belongs to the endoribonuclease YbeY family. It depends on Zn(2+) as a cofactor.

The protein localises to the cytoplasm. Its function is as follows. Single strand-specific metallo-endoribonuclease involved in late-stage 70S ribosome quality control and in maturation of the 3' terminus of the 16S rRNA. The chain is Endoribonuclease YbeY from Rhizobium johnstonii (strain DSM 114642 / LMG 32736 / 3841) (Rhizobium leguminosarum bv. viciae).